A 250-amino-acid chain; its full sequence is tRNA pseudouridine synthase A (250 aa).

Residue D52 is the Nucleophile of the active site. Y111 provides a ligand contact to substrate.

This sequence belongs to the tRNA pseudouridine synthase TruA family. As to quaternary structure, homodimer.

It carries out the reaction uridine(38/39/40) in tRNA = pseudouridine(38/39/40) in tRNA. Formation of pseudouridine at positions 38, 39 and 40 in the anticodon stem and loop of transfer RNAs. The protein is tRNA pseudouridine synthase A of Methylorubrum extorquens (strain CM4 / NCIMB 13688) (Methylobacterium extorquens).